The primary structure comprises 401 residues: Carbamoyl phosphate synthase small chain (401 aa).

The tract at residues 1 to 203 is CPSase; that stretch reads MTETAPWTTR…KGYGTLGEAD (203 aa). L-glutamine contacts are provided by serine 56, glycine 255, and glycine 257. In terms of domain architecture, Glutamine amidotransferase type-1 spans 207–395; the sequence is HVVCVDFGVK…VNLLRENKGE (189 aa). The Nucleophile role is filled by cysteine 284. L-glutamine contacts are provided by leucine 285, glutamine 288, asparagine 326, glycine 328, and phenylalanine 329. Catalysis depends on residues histidine 368 and glutamate 370.

The protein belongs to the CarA family. As to quaternary structure, composed of two chains; the small (or glutamine) chain promotes the hydrolysis of glutamine to ammonia, which is used by the large (or ammonia) chain to synthesize carbamoyl phosphate. Tetramer of heterodimers (alpha,beta)4.

The catalysed reaction is hydrogencarbonate + L-glutamine + 2 ATP + H2O = carbamoyl phosphate + L-glutamate + 2 ADP + phosphate + 2 H(+). It catalyses the reaction L-glutamine + H2O = L-glutamate + NH4(+). It functions in the pathway amino-acid biosynthesis; L-arginine biosynthesis; carbamoyl phosphate from bicarbonate: step 1/1. Its pathway is pyrimidine metabolism; UMP biosynthesis via de novo pathway; (S)-dihydroorotate from bicarbonate: step 1/3. Small subunit of the glutamine-dependent carbamoyl phosphate synthetase (CPSase). CPSase catalyzes the formation of carbamoyl phosphate from the ammonia moiety of glutamine, carbonate, and phosphate donated by ATP, constituting the first step of 2 biosynthetic pathways, one leading to arginine and/or urea and the other to pyrimidine nucleotides. The small subunit (glutamine amidotransferase) binds and cleaves glutamine to supply the large subunit with the substrate ammonia. The sequence is that of Carbamoyl phosphate synthase small chain from Agrobacterium fabrum (strain C58 / ATCC 33970) (Agrobacterium tumefaciens (strain C58)).